Here is a 492-residue protein sequence, read N- to C-terminus: Ketol-acid reductoisomerase (NADP(+)) (492 aa).

The KARI N-terminal Rossmann domain maps to 15-208; the sequence is AQLGKCRFMA…GGHRAGVLES (194 aa). NADP(+)-binding positions include 45-48, Arg-68, Arg-76, Ser-78, and 108-110; these read CGAQ and DKQ. His-132 is a catalytic residue. Residue Gly-158 coordinates NADP(+). 2 KARI C-terminal knotted domains span residues 209–344 and 345–485; these read SFVA…NAPQ and FEGK…MTDM. Mg(2+)-binding residues include Asp-217, Glu-221, Glu-389, and Glu-393. Ser-414 is a binding site for substrate.

Belongs to the ketol-acid reductoisomerase family. Mg(2+) is required as a cofactor.

It catalyses the reaction (2R)-2,3-dihydroxy-3-methylbutanoate + NADP(+) = (2S)-2-acetolactate + NADPH + H(+). It carries out the reaction (2R,3R)-2,3-dihydroxy-3-methylpentanoate + NADP(+) = (S)-2-ethyl-2-hydroxy-3-oxobutanoate + NADPH + H(+). It participates in amino-acid biosynthesis; L-isoleucine biosynthesis; L-isoleucine from 2-oxobutanoate: step 2/4. Its pathway is amino-acid biosynthesis; L-valine biosynthesis; L-valine from pyruvate: step 2/4. In terms of biological role, involved in the biosynthesis of branched-chain amino acids (BCAA). Catalyzes an alkyl-migration followed by a ketol-acid reduction of (S)-2-acetolactate (S2AL) to yield (R)-2,3-dihydroxy-isovalerate. In the isomerase reaction, S2AL is rearranged via a Mg-dependent methyl migration to produce 3-hydroxy-3-methyl-2-ketobutyrate (HMKB). In the reductase reaction, this 2-ketoacid undergoes a metal-dependent reduction by NADPH to yield (R)-2,3-dihydroxy-isovalerate. The sequence is that of Ketol-acid reductoisomerase (NADP(+)) from Yersinia pseudotuberculosis serotype O:3 (strain YPIII).